Reading from the N-terminus, the 247-residue chain is Pyridoxine 5'-phosphate synthase (247 aa).

3-amino-2-oxopropyl phosphate is bound at residue asparagine 12. Residue 14-15 (DH) participates in 1-deoxy-D-xylulose 5-phosphate binding. Arginine 23 is a binding site for 3-amino-2-oxopropyl phosphate. Residue histidine 48 is the Proton acceptor of the active site. 1-deoxy-D-xylulose 5-phosphate is bound by residues arginine 50 and histidine 55. Glutamate 75 acts as the Proton acceptor in catalysis. Threonine 105 is a 1-deoxy-D-xylulose 5-phosphate binding site. Catalysis depends on histidine 196, which acts as the Proton donor. Residues glycine 197 and 218-219 (GH) each bind 3-amino-2-oxopropyl phosphate.

The protein belongs to the PNP synthase family. Homooctamer; tetramer of dimers.

It is found in the cytoplasm. It carries out the reaction 3-amino-2-oxopropyl phosphate + 1-deoxy-D-xylulose 5-phosphate = pyridoxine 5'-phosphate + phosphate + 2 H2O + H(+). Its pathway is cofactor biosynthesis; pyridoxine 5'-phosphate biosynthesis; pyridoxine 5'-phosphate from D-erythrose 4-phosphate: step 5/5. Catalyzes the complicated ring closure reaction between the two acyclic compounds 1-deoxy-D-xylulose-5-phosphate (DXP) and 3-amino-2-oxopropyl phosphate (1-amino-acetone-3-phosphate or AAP) to form pyridoxine 5'-phosphate (PNP) and inorganic phosphate. The polypeptide is Pyridoxine 5'-phosphate synthase (Pseudomonas fluorescens (strain SBW25)).